The chain runs to 299 residues: tRNA(Met) cytidine acetate ligase (299 aa).

ATP-binding positions include 6–19 (IAEY…HIYM), G100, N157, and R182.

It belongs to the TmcAL family.

Its subcellular location is the cytoplasm. The enzyme catalyses cytidine(34) in elongator tRNA(Met) + acetate + ATP = N(4)-acetylcytidine(34) in elongator tRNA(Met) + AMP + diphosphate. Functionally, catalyzes the formation of N(4)-acetylcytidine (ac(4)C) at the wobble position of elongator tRNA(Met), using acetate and ATP as substrates. First activates an acetate ion to form acetyladenylate (Ac-AMP) and then transfers the acetyl group to tRNA to form ac(4)C34. The chain is tRNA(Met) cytidine acetate ligase from Mycoplasma mobile (strain ATCC 43663 / 163K / NCTC 11711) (Mesomycoplasma mobile).